The sequence spans 445 residues: Exodeoxyribonuclease 7 large subunit (445 aa).

Belongs to the XseA family. In terms of assembly, heterooligomer composed of large and small subunits.

It is found in the cytoplasm. It carries out the reaction Exonucleolytic cleavage in either 5'- to 3'- or 3'- to 5'-direction to yield nucleoside 5'-phosphates.. In terms of biological role, bidirectionally degrades single-stranded DNA into large acid-insoluble oligonucleotides, which are then degraded further into small acid-soluble oligonucleotides. In Shewanella oneidensis (strain ATCC 700550 / JCM 31522 / CIP 106686 / LMG 19005 / NCIMB 14063 / MR-1), this protein is Exodeoxyribonuclease 7 large subunit.